Consider the following 365-residue polypeptide: Casein kinase I homolog hhp1 (365 aa).

One can recognise a Protein kinase domain in the interval 11-279; that stretch reads YRIGRKIGSG…YLRKLFRDLF (269 aa). ATP-binding positions include 17-25 and lysine 40; that span reads IGSGSFGDI. The active-site Proton acceptor is the aspartate 130. Residues 301-311 are compositionally biased toward low complexity; it reads DQQHQQQLQQQ. Positions 301–365 are disordered; it reads DQQHQQQLQQ…TGAQYINRPN (65 aa). Residues 343–365 are compositionally biased toward polar residues; it reads INTTVPVINDPSATGAQYINRPN.

This sequence belongs to the protein kinase superfamily. CK1 Ser/Thr protein kinase family. Casein kinase I subfamily.

The protein localises to the nucleus. The enzyme catalyses L-seryl-[protein] + ATP = O-phospho-L-seryl-[protein] + ADP + H(+). It catalyses the reaction L-threonyl-[protein] + ATP = O-phospho-L-threonyl-[protein] + ADP + H(+). Its function is as follows. Involved in DNA repair. Has a probable role in repairing alkylated DNA and may regulate the activity of protein(s) involved in double strand break repair caused by gamma rays. The polypeptide is Casein kinase I homolog hhp1 (hhp1) (Schizosaccharomyces pombe (strain 972 / ATCC 24843) (Fission yeast)).